The sequence spans 209 residues: Uracil phosphoribosyltransferase (209 aa).

5-phospho-alpha-D-ribose 1-diphosphate-binding positions include Arg79, Arg104, and 131 to 139 (DPMLATGGS). Uracil-binding positions include Ile194 and 199–201 (GDA). Residue Asp200 coordinates 5-phospho-alpha-D-ribose 1-diphosphate.

It belongs to the UPRTase family. Mg(2+) is required as a cofactor.

It carries out the reaction UMP + diphosphate = 5-phospho-alpha-D-ribose 1-diphosphate + uracil. Its pathway is pyrimidine metabolism; UMP biosynthesis via salvage pathway; UMP from uracil: step 1/1. With respect to regulation, allosterically activated by GTP. Catalyzes the conversion of uracil and 5-phospho-alpha-D-ribose 1-diphosphate (PRPP) to UMP and diphosphate. The sequence is that of Uracil phosphoribosyltransferase from Clostridium acetobutylicum (strain ATCC 824 / DSM 792 / JCM 1419 / IAM 19013 / LMG 5710 / NBRC 13948 / NRRL B-527 / VKM B-1787 / 2291 / W).